The primary structure comprises 195 residues: ATP-dependent Clp protease proteolytic subunit (195 aa).

The active-site Nucleophile is Ser98. The active site involves His123.

This sequence belongs to the peptidase S14 family. Fourteen ClpP subunits assemble into 2 heptameric rings which stack back to back to give a disk-like structure with a central cavity, resembling the structure of eukaryotic proteasomes.

The protein localises to the cytoplasm. It catalyses the reaction Hydrolysis of proteins to small peptides in the presence of ATP and magnesium. alpha-casein is the usual test substrate. In the absence of ATP, only oligopeptides shorter than five residues are hydrolyzed (such as succinyl-Leu-Tyr-|-NHMec, and Leu-Tyr-Leu-|-Tyr-Trp, in which cleavage of the -Tyr-|-Leu- and -Tyr-|-Trp bonds also occurs).. In terms of biological role, cleaves peptides in various proteins in a process that requires ATP hydrolysis. Has a chymotrypsin-like activity. Plays a major role in the degradation of misfolded proteins. The chain is ATP-dependent Clp protease proteolytic subunit from Thermodesulfovibrio yellowstonii (strain ATCC 51303 / DSM 11347 / YP87).